A 606-amino-acid polypeptide reads, in one-letter code: Large subunit GTPase 1 homolog (606 aa).

Residues 1–21 form a disordered region; it reads MGKKNKGGAPNLGRQLIKDRF. A CP-type G domain is found at 165–395; it reads WRQLWRVVER…LCDCPGLVMP (231 aa). 213–216 is a GTP binding site; the sequence is NKSD. Phosphoserine is present on residues Ser276 and Ser279. GTP-binding positions include 344–351 and 388–391; these read GYPNVGKS and DCPG. Positions 574–606 are disordered; sequence LVAGNDPAAKPWRHVKKERREKLRKKFSHLDEH. Positions 584 to 600 are enriched in basic residues; the sequence is PWRHVKKERREKLRKKF.

Belongs to the TRAFAC class YlqF/YawG GTPase family. LSG1 subfamily. As to expression, expressed in larval serotonergic neurons.

Its subcellular location is the cytoplasm. Its function is as follows. GTPase required for the nuclear export of the 60S ribosomal subunit. Probably acts by mediating the release of Nmd3 from the 60S ribosomal subunit after export into the cytoplasm. Regulator of body size; acts in serotonergic neurons to regulate insulin signaling and thus exerts global growth control. This Drosophila melanogaster (Fruit fly) protein is Large subunit GTPase 1 homolog (Ns3).